The primary structure comprises 432 residues: Enolase (432 aa).

Residue Gln167 coordinates (2R)-2-phosphoglycerate. Residue Glu209 is the Proton donor of the active site. Mg(2+)-binding residues include Asp246, Glu290, and Asp317. 4 residues coordinate (2R)-2-phosphoglycerate: Lys342, Arg371, Ser372, and Lys393. Lys342 acts as the Proton acceptor in catalysis.

It belongs to the enolase family. In terms of assembly, component of the RNA degradosome, a multiprotein complex involved in RNA processing and mRNA degradation. The cofactor is Mg(2+).

The protein resides in the cytoplasm. It localises to the secreted. Its subcellular location is the cell surface. It catalyses the reaction (2R)-2-phosphoglycerate = phosphoenolpyruvate + H2O. It functions in the pathway carbohydrate degradation; glycolysis; pyruvate from D-glyceraldehyde 3-phosphate: step 4/5. Functionally, catalyzes the reversible conversion of 2-phosphoglycerate (2-PG) into phosphoenolpyruvate (PEP). It is essential for the degradation of carbohydrates via glycolysis. This is Enolase from Klebsiella pneumoniae (strain 342).